We begin with the raw amino-acid sequence, 81 residues long: MSADYDITETLDVKGASCPMPVVKTKSAIDDLAEGEILEVLATDSGSMSDIDGWASGTAGVELVDQEEGDDVYKHYVRKTK.

Cysteine 18 serves as the catalytic Cysteine persulfide intermediate.

Belongs to the sulfur carrier protein TusA family.

The protein is Putative sulfur carrier protein VNG_5061C/VNG_5236C/VNG_6059C/VNG_6467C of Halobacterium salinarum (strain ATCC 700922 / JCM 11081 / NRC-1) (Halobacterium halobium).